We begin with the raw amino-acid sequence, 159 residues long: SsrA-binding protein (159 aa).

It belongs to the SmpB family.

The protein resides in the cytoplasm. Functionally, required for rescue of stalled ribosomes mediated by trans-translation. Binds to transfer-messenger RNA (tmRNA), required for stable association of tmRNA with ribosomes. tmRNA and SmpB together mimic tRNA shape, replacing the anticodon stem-loop with SmpB. tmRNA is encoded by the ssrA gene; the 2 termini fold to resemble tRNA(Ala) and it encodes a 'tag peptide', a short internal open reading frame. During trans-translation Ala-aminoacylated tmRNA acts like a tRNA, entering the A-site of stalled ribosomes, displacing the stalled mRNA. The ribosome then switches to translate the ORF on the tmRNA; the nascent peptide is terminated with the 'tag peptide' encoded by the tmRNA and targeted for degradation. The ribosome is freed to recommence translation, which seems to be the essential function of trans-translation. This Acidothermus cellulolyticus (strain ATCC 43068 / DSM 8971 / 11B) protein is SsrA-binding protein.